A 417-amino-acid chain; its full sequence is MRFFETLALALLTTGALAAPFRHPHHLLNKRDVSVVTSKVYAYTTVTLEAAASAISTNGAAKEAATAAGDAETTSSVAASVTPAASSSVAASVTPVASSSVAASVTPVSSSAVVDSATSAAASSSVIPTSSSVVASSSEVASSTTSSAAASATSTGSSSGGFQDGVYDCTDFPSDQSGVVALDYLGYGGYSGIQIGDGAGSSCVEGAYCSYACSPGMLKTQWPSTQPSDGETRGGLLCKGGKLYRTNTAYDNLCENGVGTASVQNTLGQGVAICQTDYPGSENMVIPTYVGGGATSPLSVTDNANYFQWEGKGTSAQYYVNKAGYTAEQGCQWGTSSGDYGNWSPLVFGAGMTDGTTWLSISQNPLTSQLANYNVKIVGADGASVSGTCVFENGAFQNGGSGCTVGITSGSGVFVFY.

Positions 1–18 are cleaved as a signal peptide; the sequence is MRFFETLALALLTTGALA.

It belongs to the SUN family.

It localises to the secreted. The protein resides in the cell wall. Functionally, involved in cell wall synthesis. May be required for the activation of 1,3-beta-glucan synthase. The protein is Probable secreted beta-glucosidase PSU1 (psu1) of Schizosaccharomyces pombe (strain 972 / ATCC 24843) (Fission yeast).